A 91-amino-acid polypeptide reads, in one-letter code: Small ribosomal subunit protein uS19 (91 aa).

This sequence belongs to the universal ribosomal protein uS19 family.

Functionally, protein S19 forms a complex with S13 that binds strongly to the 16S ribosomal RNA. This chain is Small ribosomal subunit protein uS19, found in Halorhodospira halophila (strain DSM 244 / SL1) (Ectothiorhodospira halophila (strain DSM 244 / SL1)).